A 190-amino-acid polypeptide reads, in one-letter code: dCTP deaminase, dUMP-forming (190 aa).

DCTP is bound by residues 101–106 (KSSLGR), Asp119, 127–129 (TLE), Gln148, Tyr162, and Gln174. Residue Glu129 is the Proton donor/acceptor of the active site. Positions 162–184 (YGSAKVGSKYQGQRGPTPSRSYQ) are disordered. A compositionally biased stretch (polar residues) spans 171 to 184 (YQGQRGPTPSRSYQ).

This sequence belongs to the dCTP deaminase family. In terms of assembly, homotrimer.

The catalysed reaction is dCTP + 2 H2O = dUMP + NH4(+) + diphosphate. Its pathway is pyrimidine metabolism; dUMP biosynthesis; dUMP from dCTP: step 1/1. In terms of biological role, bifunctional enzyme that catalyzes both the deamination of dCTP to dUTP and the hydrolysis of dUTP to dUMP without releasing the toxic dUTP intermediate. The polypeptide is dCTP deaminase, dUMP-forming (Mycobacterium sp. (strain JLS)).